Reading from the N-terminus, the 456-residue chain is Chromosomal replication initiator protein DnaA (456 aa).

Residues 1–73 form a domain I, interacts with DnaA modulators region; sequence MEIYLDNLWD…ADVVHDILGY (73 aa). Positions 73-117 are domain II; that stretch reads YPVEIYLTTFLVEDSRKNDSGLIWSEHKSVNILGENLSIPKPLPA. Residues 118–334 are domain III, AAA+ region; the sequence is NLNAKYMFSR…GALTRVVTYI (217 aa). Residues glycine 162, glycine 164, lysine 165, and threonine 166 each coordinate ATP. Positions 335 to 456 are domain IV, binds dsDNA; the sequence is SISGLPMTVE…SDRINFSSRH (122 aa).

Belongs to the DnaA family. In terms of assembly, oligomerizes as a right-handed, spiral filament on DNA at oriC.

It is found in the cytoplasm. In terms of biological role, plays an essential role in the initiation and regulation of chromosomal replication. ATP-DnaA binds to the origin of replication (oriC) to initiate formation of the DNA replication initiation complex once per cell cycle. Binds the DnaA box (a 9 base pair repeat at the origin) and separates the double-stranded (ds)DNA. Forms a right-handed helical filament on oriC DNA; dsDNA binds to the exterior of the filament while single-stranded (ss)DNA is stabiized in the filament's interior. The ATP-DnaA-oriC complex binds and stabilizes one strand of the AT-rich DNA unwinding element (DUE), permitting loading of DNA polymerase. After initiation quickly degrades to an ADP-DnaA complex that is not apt for DNA replication. Binds acidic phospholipids. The sequence is that of Chromosomal replication initiator protein DnaA from Trichodesmium erythraeum (strain IMS101).